Consider the following 572-residue polypeptide: Proline--tRNA ligase (572 aa).

The protein belongs to the class-II aminoacyl-tRNA synthetase family. ProS type 1 subfamily. As to quaternary structure, homodimer.

It localises to the cytoplasm. It catalyses the reaction tRNA(Pro) + L-proline + ATP = L-prolyl-tRNA(Pro) + AMP + diphosphate. Its function is as follows. Catalyzes the attachment of proline to tRNA(Pro) in a two-step reaction: proline is first activated by ATP to form Pro-AMP and then transferred to the acceptor end of tRNA(Pro). As ProRS can inadvertently accommodate and process non-cognate amino acids such as alanine and cysteine, to avoid such errors it has two additional distinct editing activities against alanine. One activity is designated as 'pretransfer' editing and involves the tRNA(Pro)-independent hydrolysis of activated Ala-AMP. The other activity is designated 'posttransfer' editing and involves deacylation of mischarged Ala-tRNA(Pro). The misacylated Cys-tRNA(Pro) is not edited by ProRS. The polypeptide is Proline--tRNA ligase (Enterococcus faecalis (strain ATCC 700802 / V583)).